A 633-amino-acid polypeptide reads, in one-letter code: E3 ubiquitin-protein ligase ZSWIM2 (633 aa).

An SWIM-type zinc finger spans residues 54–87 (FRVFLGNPHVCNCSTFPKGGELCKHICWVLLKKF). The RING-type 1 zinc finger occupies 147–198 (CSICQELLLEKKLPVTFCRFGCGNSIHIKCMKILANYQSTSNTSMLKCPLCR). Residues 229–280 (HLGIPCNNCKQFPIEGKCYKCTECIEYHLCQECFDSCCHLSHTFTFREKRNQ) form a ZZ-type zinc finger. C234, C237, C249, C252, C258, C261, H267, and H270 together coordinate Zn(2+). An RING-type 2 zinc finger spans residues 344-388 (CLLCLKAFHLGQHTRLLPCTHKFHRKCIDNWLFHKCNSCPIDGQV).

As to quaternary structure, dimer. Interacts with UBE2D1. Polyubiquitinated. Polyubiquitination is followed by degradation via the proteasome. In terms of tissue distribution, expression is testis-specific.

It carries out the reaction S-ubiquitinyl-[E2 ubiquitin-conjugating enzyme]-L-cysteine + [acceptor protein]-L-lysine = [E2 ubiquitin-conjugating enzyme]-L-cysteine + N(6)-ubiquitinyl-[acceptor protein]-L-lysine.. In terms of biological role, E3 ubiquitin-protein ligase involved in the regulation of Fas-, DR3- and DR4-mediated apoptosis. Functions in conjunction with the UBE2D1, UBE2D3 and UBE2E1 E2 ubiquitin-conjugating enzymes. The polypeptide is E3 ubiquitin-protein ligase ZSWIM2 (Homo sapiens (Human)).